A 403-amino-acid polypeptide reads, in one-letter code: MASALRPPRVPKPKGVLPSHYYESFLEKKGPCDRDYKKFWAGLQGLTIYFYNSNRDFQHVEKLNLGAFEKLTDEIPWGSSRDPGTHFSLILRDQEIKFKVETLECREMWKGFILTVVELRVPTDLTLLPGHLYMMSEVLAKEEARRALETPSCFLKVSRLEAQLLLERYPECGNLLLRPSGDGADGVSVTTRQMHNGTHVVRHYKVKREGPKYVIDVEQPFSCTSLDAVVNYFVSHTKKALVPFLLDEDYEKVLGYVEADKENGENVWVAPSAPGPGPAPCTGGPKPLSPASSQDKLPPLPPLPNQEENYVTPIGDGPAVDYENQDVASSSWPVILKPKKLPKPPAKLPKPPVGPKPEPKVFNGGLGRKLPVSSAQPLFPTAGLADMTAELQKKLEKRRALEH.

The 113-residue stretch at 18–130 folds into the PH domain; the sequence is PSHYYESFLE…VPTDLTLLPG (113 aa). At Tyr-22 the chain carries Phosphotyrosine; by SRC. In terms of domain architecture, SH2 spans 133–248; that stretch reads YMMSEVLAKE…KALVPFLLDE (116 aa). Tyr-250 bears the Phosphotyrosine; by PTK6 mark. The segment at 270 to 308 is disordered; the sequence is APSAPGPGPAPCTGGPKPLSPASSQDKLPPLPPLPNQEE. A Phosphotyrosine modification is found at Tyr-310. A Phosphotyrosine; by SRC modification is found at Tyr-322. The disordered stretch occupies residues 331–374; sequence SWPVILKPKKLPKPPAKLPKPPVGPKPEPKVFNGGLGRKLPVSS. The span at 343-356 shows a compositional bias: pro residues; that stretch reads KPPAKLPKPPVGPK. A coiled-coil region spans residues 382–402; it reads AGLADMTAELQKKLEKRRALE.

Interacts with PTK6 and CSF1R. In terms of processing, phosphorylated on tyrosine. Tyr-250 may be important for interaction with kinases. Phosphorylated by PTK6 at Tyr-250 modulates PTK6-mediated STAT3 activation. Tyr-22 and Tyr-322 appears to be phosphorylated by SRC. Widely expressed.

It localises to the cytoplasm. In terms of biological role, substrate of protein kinase PTK6. May play a regulatory role in the acute-phase response in systemic inflammation and may modulate STAT3 activity. The polypeptide is Signal-transducing adaptor protein 2 (STAP2) (Homo sapiens (Human)).